Consider the following 253-residue polypeptide: Discoidin-1 subunit B/C (253 aa).

Ser2 is subject to N-acetylserine. Residues Ser2 to Gln152 enclose the F5/8 type C domain. The short motif at Arg79–Asp81 is the Cell attachment site element.

In terms of assembly, tetramer of four different chains (A to D). Stalk cells.

Its subcellular location is the cytoplasm. In terms of biological role, galactose- and N-acetylgalactosamine-binding lectin. May play a role in cell-substratum adhesion rather than in cell-cell adhesion. May be necessary for the maintenance of normal elongate morphology during aggregation. The sequence is that of Discoidin-1 subunit B/C (dscC-1) from Dictyostelium discoideum (Social amoeba).